Consider the following 134-residue polypeptide: RxLR effector protein Avh238 (134 aa).

The first 21 residues, 1–21, serve as a signal peptide directing secretion; the sequence is MRGVFFVAVAVAIFARSSAEA. Positions 44–68 match the RxLR-dEER motif; sequence RFLRVADPEDDDLAAPADDGKTEER. The interval 49–70 is disordered; it reads ADPEDDDLAAPADDGKTEERAP. Over residues 61–70 the composition is skewed to basic and acidic residues; it reads DDGKTEERAP.

This sequence belongs to the RxLR effector family. As to quaternary structure, interacts with host 1-aminocyclopropane-1-carboxylate synthases ACS1, ACS2, ACS3, ACS10 and ACS12.

It is found in the secreted. The protein localises to the host cytoplasm. The protein resides in the host nucleus. Effector that suppresses plant defense responses during the early stages of pathogen infection. Suppresses cell death induced by effectors and PAMPs in plant hosts. Is able to induced cell death in tomato, tobacco, eggplant, and potato, but not in A.thaliana. Interacts with and destabilizes host 1-aminocyclopropane-1-carboxylate synthases. By suppressing type2 ACS-catalyzed ethylene biosynthesis, Avh238 facilitates Phytophthora infection. This Phytophthora sojae (strain P6497) (Soybean stem and root rot agent) protein is RxLR effector protein Avh238 (Avh238).